Here is a 163-residue protein sequence, read N- to C-terminus: Putative protein CASTOR3P (163 aa).

The protein belongs to the GATS family.

In Homo sapiens (Human), this protein is Putative protein CASTOR3P.